The chain runs to 252 residues: Imidazole glycerol phosphate synthase subunit HisF (252 aa).

Residues D13 and D132 contribute to the active site.

The protein belongs to the HisA/HisF family. As to quaternary structure, heterodimer of HisH and HisF.

It localises to the cytoplasm. It carries out the reaction 5-[(5-phospho-1-deoxy-D-ribulos-1-ylimino)methylamino]-1-(5-phospho-beta-D-ribosyl)imidazole-4-carboxamide + L-glutamine = D-erythro-1-(imidazol-4-yl)glycerol 3-phosphate + 5-amino-1-(5-phospho-beta-D-ribosyl)imidazole-4-carboxamide + L-glutamate + H(+). The protein operates within amino-acid biosynthesis; L-histidine biosynthesis; L-histidine from 5-phospho-alpha-D-ribose 1-diphosphate: step 5/9. Functionally, IGPS catalyzes the conversion of PRFAR and glutamine to IGP, AICAR and glutamate. The HisF subunit catalyzes the cyclization activity that produces IGP and AICAR from PRFAR using the ammonia provided by the HisH subunit. This chain is Imidazole glycerol phosphate synthase subunit HisF, found in Campylobacter fetus subsp. fetus (strain 82-40).